The primary structure comprises 228 residues: Urease accessory protein UreF (228 aa).

The protein belongs to the UreF family. As to quaternary structure, ureD, UreF and UreG form a complex that acts as a GTP-hydrolysis-dependent molecular chaperone, activating the urease apoprotein by helping to assemble the nickel containing metallocenter of UreC. The UreE protein probably delivers the nickel.

Its subcellular location is the cytoplasm. In terms of biological role, required for maturation of urease via the functional incorporation of the urease nickel metallocenter. The chain is Urease accessory protein UreF from Lachnoclostridium phytofermentans (strain ATCC 700394 / DSM 18823 / ISDg) (Clostridium phytofermentans).